The sequence spans 187 residues: Cytokinin riboside 5'-monophosphate phosphoribohydrolase (187 aa).

Substrate-binding positions include glutamate 80, 98-99, 115-121, and threonine 127; these read RK and GVGTLDE.

Belongs to the LOG family.

The catalysed reaction is N(6)-(dimethylallyl)adenosine 5'-phosphate + H2O = N(6)-dimethylallyladenine + D-ribose 5-phosphate. It catalyses the reaction 9-ribosyl-trans-zeatin 5'-phosphate + H2O = trans-zeatin + D-ribose 5-phosphate. Functionally, catalyzes the hydrolytic removal of ribose 5'-monophosphate from nitrogen N6-modified adenosines, the final step of bioactive cytokinin synthesis. This is Cytokinin riboside 5'-monophosphate phosphoribohydrolase from Mycobacterium marinum (strain ATCC BAA-535 / M).